Reading from the N-terminus, the 1206-residue chain is uncharacterized protein (1206 aa).

3 disordered regions span residues 133–547 (YDLD…PVDY), 568–837 (FASS…DQLL), and 859–1206 (RQRA…KATS). Composition is skewed to pro residues over residues 139 to 151 (IPPP…PGPP) and 159 to 234 (GESP…PPAP). Serine 255 carries the phosphoserine modification. Over residues 305-319 (VRTSSIPVQEAPGAS) the composition is skewed to low complexity. The span at 351–363 (RALEPEQPREPRP) shows a compositional bias: basic and acidic residues. Pro residues predominate over residues 384 to 413 (APPPAPPLPPPAPPLPPPAPSLPPAAPPLP). Low complexity predominate over residues 414–436 (STELAAPPSSGFMKTSKSNSPAL). Residues 454-467 (VDWRDPRQMEKLRS) are compositionally biased toward basic and acidic residues. Residues 522 to 531 (PEKSPSSSSL) show a composition bias toward low complexity. The span at 568 to 577 (FASSAEKEAK) shows a compositional bias: basic and acidic residues. Residues 656 to 671 (LPKATPGLTLPLKPTP) show a composition bias toward low complexity. At threonine 680 the chain carries Phosphothreonine. Residues 732-747 (AEKDLASVRQREKPET) show a composition bias toward basic and acidic residues. Residues 1001-1016 (IPPPPEFSNDPEPPAP) show a composition bias toward pro residues. The span at 1028-1041 (PRNNFSDLGQSWGP) shows a compositional bias: polar residues. Omega-N-methylarginine is present on residues arginine 1051, arginine 1083, and arginine 1094. Residues 1170 to 1184 (PHGNTHYGSPINTFT) are compositionally biased toward polar residues.

This is an uncharacterized protein from Mus musculus (Mouse).